The following is a 243-amino-acid chain: MQQNHESLLFQLSSVEVGQHYYWNIGSFQVHAQVLITSWFVLGLLLGIALIATRKLETIPNTTQNFIEYVLEFIRDLTRTQIGEEEYRSWIPFVGTLFLFIFVSNWSGALIPWKVIELPNGELAAPTNDINTTVALALLTSVAYFYAGLNKKGLSYFGKYIQPTPVLLPINILEDFTKPLSLSFRLFGNILADELVVAVLVSLVPLVIPVPMMFLGLFTSGIQALIFATLAGAYIGESLEGHH.

5 helical membrane passes run 32-52, 91-111, 130-150, 195-215, and 216-236; these read AQVL…ALIA, IPFV…GALI, INTT…AGLN, LVVA…MMFL, and GLFT…AYIG.

The protein belongs to the ATPase A chain family. F-type ATPases have 2 components, CF(1) - the catalytic core - and CF(0) - the membrane proton channel. CF(1) has five subunits: alpha(3), beta(3), gamma(1), delta(1), epsilon(1). CF(0) has four main subunits: a, b, b' and c.

The protein localises to the plastid. It localises to the chloroplast thylakoid membrane. In terms of biological role, key component of the proton channel; it plays a direct role in the translocation of protons across the membrane. The sequence is that of ATP synthase subunit a, chloroplastic from Chaetosphaeridium globosum (Charophycean green alga).